Consider the following 440-residue polypeptide: Protein FPV117 (440 aa).

Belongs to the poxviruses G5 family.

In Fowlpox virus (strain NVSL) (FPV), this protein is Protein FPV117.